Reading from the N-terminus, the 414-residue chain is 11-beta-hydroxysteroid dehydrogenase type 2 (414 aa).

A run of 4 helical transmembrane segments spans residues 3–23 (DFAV…GGAV), 26–46 (FLAF…ATLL), 52–72 (ALCM…WLYF), and 341–361 (YYAG…PLSI). The segment at 382 to 414 (KQQGLSPNDNNNSIKENMNDSSSNNSNFTKCID) is disordered. A compositionally biased stretch (polar residues) spans 384 to 397 (QGLSPNDNNNSIKE).

This sequence belongs to the short-chain dehydrogenases/reductases (SDR) family. As to expression, broadly expressed in peripheral (brain, gill, eye, heart, liver, head kidney, posterior kidney, and gut).

Its subcellular location is the membrane. It catalyses the reaction an 11beta-hydroxysteroid + NAD(+) = an 11-oxosteroid + NADH + H(+). The catalysed reaction is cortisol + NAD(+) = cortisone + NADH + H(+). It carries out the reaction corticosterone + NAD(+) = 11-dehydrocorticosterone + NADH + H(+). The enzyme catalyses 11beta,17beta-dihydroxyandrost-4-ene-3-one + NAD(+) = 17beta-hydroxyandrost-4-ene-3,11-dione + NADH + H(+). It catalyses the reaction 11beta-hydroxyandrost-4-ene-3,17-dione + NAD(+) = androst-4-ene-3,11,17-trione + NADH + H(+). It participates in steroid metabolism. Its function is as follows. Catalyzes the conversion of biologically active 11beta-hydroxyglucocorticoids (11beta-hydroxysteroid) such as cortisol, to inactive 11-ketoglucocorticoids (11-oxosteroid) such as cortisone, in the presence of NAD(+). Cortisol is the primary glucocorticoid in teleosts and is released to increase glucose bioavailability in order to meet the increased energy demands in response to stress. Functions as a dehydrogenase (oxidase), thereby decreasing the concentration of active glucocorticoids, regulating the hypothalamus-pituitary-interrenal (HPI) axis function in adult fish. Decreasing the excess glucocorticoids may be of relevance to brain function and neural proliferation. Plays a key role by catalyzing the oxidation of 11beta-hydroxytestosterone (11beta,17beta-dihydroxyandrost-4-ene-3-one) to 11-ketotestosterone (17beta-hydroxyandrost-4-ene-3,11-dione), the major fish androgen, that activates androgen receptor transcriptional activity. Catalyzes the conversion of 11beta-hydroxyandrostenedione (11beta-hydroxyandrost-4-ene-3,17-dione) to 11-ketoandrostenedione (androst-4-ene-3,11,17-trione), which can be further metabolized to 11-ketotestosterone. Exerts a dual role in fish by inactivating glucocorticoids and activating androgens. The polypeptide is 11-beta-hydroxysteroid dehydrogenase type 2 (hsd11b2) (Danio rerio (Zebrafish)).